Reading from the N-terminus, the 437-residue chain is Enolase (437 aa).

(2R)-2-phosphoglycerate is bound at residue Gln162. Glu204 (proton donor) is an active-site residue. Residues Asp251, Glu297, and Asp324 each contribute to the Mg(2+) site. (2R)-2-phosphoglycerate is bound by residues Lys349, Arg378, Ser379, and Lys400. The active-site Proton acceptor is the Lys349.

It belongs to the enolase family. It depends on Mg(2+) as a cofactor.

It localises to the cytoplasm. Its subcellular location is the secreted. The protein resides in the cell surface. The enzyme catalyses (2R)-2-phosphoglycerate = phosphoenolpyruvate + H2O. The protein operates within carbohydrate degradation; glycolysis; pyruvate from D-glyceraldehyde 3-phosphate: step 4/5. Catalyzes the reversible conversion of 2-phosphoglycerate (2-PG) into phosphoenolpyruvate (PEP). It is essential for the degradation of carbohydrates via glycolysis. The chain is Enolase from Chlorobium limicola (strain DSM 245 / NBRC 103803 / 6330).